The chain runs to 122 residues: Large ribosomal subunit protein uL14 (122 aa).

The protein belongs to the universal ribosomal protein uL14 family. Part of the 50S ribosomal subunit. Forms a cluster with proteins L3 and L19. In the 70S ribosome, L14 and L19 interact and together make contacts with the 16S rRNA in bridges B5 and B8.

Its function is as follows. Binds to 23S rRNA. Forms part of two intersubunit bridges in the 70S ribosome. This Pelobacter propionicus (strain DSM 2379 / NBRC 103807 / OttBd1) protein is Large ribosomal subunit protein uL14.